Here is a 1550-residue protein sequence, read N- to C-terminus: Pentafunctional AROM polypeptide (1550 aa).

The 3-dehydroquinate synthase stretch occupies residues Met1 to Lys379. NAD(+) contacts are provided by residues Asp42 to Asn44, Glu80 to Lys83, Gly111 to Val113, and Asp116. Residue Arg127 coordinates 7-phospho-2-dehydro-3-deoxy-D-arabino-heptonate. Thr136–Thr137 contributes to the NAD(+) binding site. 7-phospho-2-dehydro-3-deoxy-D-arabino-heptonate contacts are provided by Asp143 and Lys149. Lys158 is a binding site for NAD(+). Asn159 contributes to the 7-phospho-2-dehydro-3-deoxy-D-arabino-heptonate binding site. Residues Phe176–Thr179 and Asn187 contribute to the NAD(+) site. A Zn(2+)-binding site is contributed by Glu191. Residues Glu191–Lys194 and Lys243 each bind 7-phospho-2-dehydro-3-deoxy-D-arabino-heptonate. Glu253 serves as the catalytic Proton acceptor; for 3-dehydroquinate synthase activity. 7-phospho-2-dehydro-3-deoxy-D-arabino-heptonate contacts are provided by residues Arg257–Asn261 and His264. His264 is a binding site for Zn(2+). The Proton acceptor; for 3-dehydroquinate synthase activity role is filled by His268. 2 residues coordinate 7-phospho-2-dehydro-3-deoxy-D-arabino-heptonate: His280 and Lys351. Residue His280 participates in Zn(2+) binding. The segment at Val392–Ile837 is EPSP synthase. Residues Asp857–Val1047 are shikimate kinase. Residue Gly864 to Ser871 participates in ATP binding. The segment at Leu1048–Glu1257 is 3-dehydroquinase. Arg1193 serves as the catalytic Schiff-base intermediate with substrate; for 3-dehydroquinate dehydratase activity. The interval Ala1270–Glu1550 is shikimate dehydrogenase.

It in the N-terminal section; belongs to the sugar phosphate cyclases superfamily. Dehydroquinate synthase family. The protein in the 2nd section; belongs to the EPSP synthase family. This sequence in the 3rd section; belongs to the shikimate kinase family. In the 4th section; belongs to the type-I 3-dehydroquinase family. It in the C-terminal section; belongs to the shikimate dehydrogenase family. As to quaternary structure, homodimer. Zn(2+) is required as a cofactor.

It localises to the cytoplasm. The catalysed reaction is 7-phospho-2-dehydro-3-deoxy-D-arabino-heptonate = 3-dehydroquinate + phosphate. It carries out the reaction 3-dehydroquinate = 3-dehydroshikimate + H2O. The enzyme catalyses shikimate + NADP(+) = 3-dehydroshikimate + NADPH + H(+). It catalyses the reaction shikimate + ATP = 3-phosphoshikimate + ADP + H(+). The catalysed reaction is 3-phosphoshikimate + phosphoenolpyruvate = 5-O-(1-carboxyvinyl)-3-phosphoshikimate + phosphate. It functions in the pathway metabolic intermediate biosynthesis; chorismate biosynthesis; chorismate from D-erythrose 4-phosphate and phosphoenolpyruvate: step 2/7. It participates in metabolic intermediate biosynthesis; chorismate biosynthesis; chorismate from D-erythrose 4-phosphate and phosphoenolpyruvate: step 3/7. Its pathway is metabolic intermediate biosynthesis; chorismate biosynthesis; chorismate from D-erythrose 4-phosphate and phosphoenolpyruvate: step 4/7. The protein operates within metabolic intermediate biosynthesis; chorismate biosynthesis; chorismate from D-erythrose 4-phosphate and phosphoenolpyruvate: step 5/7. It functions in the pathway metabolic intermediate biosynthesis; chorismate biosynthesis; chorismate from D-erythrose 4-phosphate and phosphoenolpyruvate: step 6/7. Its function is as follows. The AROM polypeptide catalyzes 5 consecutive enzymatic reactions in prechorismate polyaromatic amino acid biosynthesis. This Candida dubliniensis (strain CD36 / ATCC MYA-646 / CBS 7987 / NCPF 3949 / NRRL Y-17841) (Yeast) protein is Pentafunctional AROM polypeptide.